Consider the following 728-residue polypeptide: 1,4-alpha-glucan branching enzyme GlgB (728 aa).

Asp405 functions as the Nucleophile in the catalytic mechanism. The active-site Proton donor is Glu458.

Belongs to the glycosyl hydrolase 13 family. GlgB subfamily. As to quaternary structure, monomer.

It catalyses the reaction Transfers a segment of a (1-&gt;4)-alpha-D-glucan chain to a primary hydroxy group in a similar glucan chain.. It participates in glycan biosynthesis; glycogen biosynthesis. Its function is as follows. Catalyzes the formation of the alpha-1,6-glucosidic linkages in glycogen by scission of a 1,4-alpha-linked oligosaccharide from growing alpha-1,4-glucan chains and the subsequent attachment of the oligosaccharide to the alpha-1,6 position. The protein is 1,4-alpha-glucan branching enzyme GlgB of Serratia proteamaculans (strain 568).